The chain runs to 417 residues: Adenylosuccinate synthetase (417 aa).

GTP contacts are provided by residues 11–17 (GDEGKGK) and 39–41 (GHT). Residue Asp-12 is the Proton acceptor of the active site. The Mg(2+) site is built by Asp-12 and Gly-39. Residues 12–15 (DEGK), 37–40 (NAGH), Thr-126, Arg-140, Gln-218, Thr-233, and Arg-295 each bind IMP. Residue His-40 is the Proton donor of the active site. Substrate is bound at residue 291-297 (TVSGRIR). GTP contacts are provided by residues Arg-297, 323-325 (KLD), and 406-408 (SNG).

This sequence belongs to the adenylosuccinate synthetase family. In terms of assembly, homodimer. Requires Mg(2+) as cofactor.

It localises to the cytoplasm. The catalysed reaction is IMP + L-aspartate + GTP = N(6)-(1,2-dicarboxyethyl)-AMP + GDP + phosphate + 2 H(+). It functions in the pathway purine metabolism; AMP biosynthesis via de novo pathway; AMP from IMP: step 1/2. Its function is as follows. Plays an important role in the de novo pathway of purine nucleotide biosynthesis. Catalyzes the first committed step in the biosynthesis of AMP from IMP. The chain is Adenylosuccinate synthetase from Neorickettsia sennetsu (strain ATCC VR-367 / Miyayama) (Ehrlichia sennetsu).